Reading from the N-terminus, the 58-residue chain is Small ribosomal subunit protein bS21 (58 aa).

A disordered region spans residues 36–58 (EHYEKPSVKRKKKSEAARKRKFK). The segment covering 43-58 (VKRKKKSEAARKRKFK) has biased composition (basic residues).

The protein belongs to the bacterial ribosomal protein bS21 family.

The chain is Small ribosomal subunit protein bS21 from Clostridium kluyveri (strain NBRC 12016).